The primary structure comprises 275 residues: Phosphonoacetaldehyde hydrolase (275 aa).

The Nucleophile role is filled by aspartate 15. Positions 15 and 17 each coordinate Mg(2+). The Schiff-base intermediate with substrate role is filled by lysine 56. Aspartate 189 is a binding site for Mg(2+).

Belongs to the HAD-like hydrolase superfamily. PhnX family. As to quaternary structure, homodimer. It depends on Mg(2+) as a cofactor.

The catalysed reaction is phosphonoacetaldehyde + H2O = acetaldehyde + phosphate + H(+). In terms of biological role, involved in phosphonate degradation. The chain is Phosphonoacetaldehyde hydrolase from Pseudomonas putida (strain ATCC 700007 / DSM 6899 / JCM 31910 / BCRC 17059 / LMG 24140 / F1).